Here is a 598-residue protein sequence, read N- to C-terminus: Elongation factor 4 (598 aa).

Residues 4-181 enclose the tr-type G domain; sequence KKIRNFAIIA…AIVNLIPPPQ (178 aa). GTP-binding positions include 16–21 and 128–131; these read DHGKST and NKID.

It belongs to the TRAFAC class translation factor GTPase superfamily. Classic translation factor GTPase family. LepA subfamily.

The protein localises to the cell membrane. It catalyses the reaction GTP + H2O = GDP + phosphate + H(+). Its function is as follows. Required for accurate and efficient protein synthesis under certain stress conditions. May act as a fidelity factor of the translation reaction, by catalyzing a one-codon backward translocation of tRNAs on improperly translocated ribosomes. Back-translocation proceeds from a post-translocation (POST) complex to a pre-translocation (PRE) complex, thus giving elongation factor G a second chance to translocate the tRNAs correctly. Binds to ribosomes in a GTP-dependent manner. In Mesomycoplasma hyopneumoniae (strain 232) (Mycoplasma hyopneumoniae), this protein is Elongation factor 4.